The sequence spans 401 residues: Ribosomal RNA large subunit methyltransferase G (401 aa).

It belongs to the methyltransferase superfamily. RlmG family.

Its subcellular location is the cytoplasm. The enzyme catalyses guanosine(1835) in 23S rRNA + S-adenosyl-L-methionine = N(2)-methylguanosine(1835) in 23S rRNA + S-adenosyl-L-homocysteine + H(+). In terms of biological role, specifically methylates the guanine in position 1835 (m2G1835) of 23S rRNA. The chain is Ribosomal RNA large subunit methyltransferase G from Shewanella loihica (strain ATCC BAA-1088 / PV-4).